The primary structure comprises 485 residues: Noelin (485 aa).

Residues 1–16 (MSVPLLKIGVVLSTMA) form the signal peptide. 8 N-linked (GlcNAc...) asparagine glycosylation sites follow: asparagine 33, asparagine 103, asparagine 187, asparagine 288, asparagine 307, asparagine 394, asparagine 431, and asparagine 473. Residues 87 to 225 (RDARTKQLRQ…ERLRACMQKL (139 aa)) adopt a coiled-coil conformation. In terms of domain architecture, Olfactomedin-like spans 226-478 (ACGKLTGISD…QILYNVTLFH (253 aa)). An intrachain disulfide couples cysteine 227 to cysteine 409.

As to quaternary structure, homotetramer; disulfide-linked. Dimer of dimers, giving rise to a V-shaped homotretramer. Component of the AMPAR complex. Post-translationally, glycosylated.

It is found in the secreted. The protein localises to the synapse. Its subcellular location is the endoplasmic reticulum. The protein resides in the cell projection. It localises to the axon. It is found in the perikaryon. In terms of biological role, contributes to the regulation of axonal growth. May play an important role in regulating the production of neural crest cells by the neural tube. This is Noelin (OLFM1) from Gallus gallus (Chicken).